A 444-amino-acid polypeptide reads, in one-letter code: ATPase PAAT (444 aa).

4 positions are modified to phosphoserine: serine 177, serine 182, serine 254, and serine 302. Residues 424-444 are disordered; that stretch reads PSPGMPLRHYDSRERLSNGER. The span at 431 to 444 shows a compositional bias: basic and acidic residues; that stretch reads RHYDSRERLSNGER.

As to quaternary structure, homodimer. Interacts with ABCB7, ABCB8/MITOSUR and ABCB10.

The protein resides in the cytoplasm. It is found in the mitochondrion. It catalyses the reaction ATP + H2O = ADP + phosphate + H(+). Functionally, ATPase that regulates mitochondrial ABC transporters ABCB7, ABCB8/MITOSUR and ABCB10. Regulates mitochondrial ferric concentration and heme biosynthesis and plays a role in the maintenance of mitochondrial homeostasis and cell survival. This chain is ATPase PAAT, found in Rattus norvegicus (Rat).